Here is an 851-residue protein sequence, read N- to C-terminus: Glycogen phosphorylase, liver form (851 aa).

Ala-2 is modified (N-acetylalanine). Ser-15 bears the Phosphoserine; by PHK; in form phosphorylase a mark. AMP contacts are provided by residues 43–45 (DRN), Tyr-76, and Arg-310. The residue at position 364 (Lys-364) is an N6-succinyllysine. An N6-acetyllysine modification is found at Lys-470. 3 positions are modified to phosphoserine: Ser-524, Ser-561, and Ser-639. Lys-681 carries the N6-(pyridoxal phosphate)lysine modification. Lys-796 bears the N6-acetyllysine mark.

This sequence belongs to the glycogen phosphorylase family. In terms of assembly, homodimer; enzymatically active. Interacts with PPP1R3B; recruits the phosphatase PP1 which dephosphorylates and inactivates PYGL/glycogen phosphorylase. The cofactor is pyridoxal 5'-phosphate. Acetylation, which is up-regulated by glucose and insulin and down-regulated by glucagon, inhibits the glycogen phosphorylase activity by promoting PPP1R3B-mediated recruitment of phosphatase PP1 and Ser-15 dephosphorylation. In terms of processing, phosphorylation at Ser-15 converts inactive phosphorylase b into active phosphorylase a. Dephosphorylation of Ser-15 by phosphatase PP1 inactivates the enzyme.

The protein localises to the cytoplasm. Its subcellular location is the cytosol. It catalyses the reaction [(1-&gt;4)-alpha-D-glucosyl](n) + phosphate = [(1-&gt;4)-alpha-D-glucosyl](n-1) + alpha-D-glucose 1-phosphate. With respect to regulation, allosterically regulated through the non-covalent binding of metabolites, being activated by AMP and inhibited by ATP, ADP, and glucose-6-phosphate. The activity is also controlled by post-translational modifications including phosphorylation and acetylation. Its function is as follows. Allosteric enzyme that catalyzes the rate-limiting step in glycogen catabolism, the phosphorolytic cleavage of glycogen to produce glucose-1-phosphate, and plays a central role in maintaining cellular and organismal glucose homeostasis. The chain is Glycogen phosphorylase, liver form from Bos taurus (Bovine).